We begin with the raw amino-acid sequence, 60 residues long: UPF0434 protein Ssed_2824 (60 aa).

It belongs to the UPF0434 family.

This is UPF0434 protein Ssed_2824 from Shewanella sediminis (strain HAW-EB3).